The primary structure comprises 181 residues: MSKSEHNLIWIDLEMTGLDPERDRIIEIATIVTDANLNILDEGPVIAVHQSDEQLALMDKWNVRTHTGSGLVERVKASKIDDREAEKATIEFLEKWVPAGASPICGNSVSQDRRFLFRYMPELEAYFHYRYLDVSTLKELARRWKPEILAGLKKQNTHQALDDIRESVAELAYYREHFIQL.

The 164-residue stretch at 8 to 171 (LIWIDLEMTG…DDIRESVAEL (164 aa)) folds into the Exonuclease domain. Residue Tyr-129 is part of the active site.

Belongs to the oligoribonuclease family.

It is found in the cytoplasm. In terms of biological role, 3'-to-5' exoribonuclease specific for small oligoribonucleotides. This chain is Oligoribonuclease, found in Photorhabdus laumondii subsp. laumondii (strain DSM 15139 / CIP 105565 / TT01) (Photorhabdus luminescens subsp. laumondii).